We begin with the raw amino-acid sequence, 400 residues long: CCA-adding enzyme (400 aa).

ATP is bound by residues glycine 28 and arginine 31. 2 residues coordinate CTP: glycine 28 and arginine 31. Mg(2+) is bound by residues aspartate 41 and aspartate 43. Residues arginine 112, aspartate 155, arginine 158, arginine 161, and arginine 164 each coordinate ATP. 5 residues coordinate CTP: arginine 112, aspartate 155, arginine 158, arginine 161, and arginine 164.

This sequence belongs to the tRNA nucleotidyltransferase/poly(A) polymerase family. Bacterial CCA-adding enzyme type 3 subfamily. Homodimer. Mg(2+) is required as a cofactor.

It carries out the reaction a tRNA precursor + 2 CTP + ATP = a tRNA with a 3' CCA end + 3 diphosphate. The catalysed reaction is a tRNA with a 3' CCA end + 2 CTP + ATP = a tRNA with a 3' CCACCA end + 3 diphosphate. Functionally, catalyzes the addition and repair of the essential 3'-terminal CCA sequence in tRNAs without using a nucleic acid template. Adds these three nucleotides in the order of C, C, and A to the tRNA nucleotide-73, using CTP and ATP as substrates and producing inorganic pyrophosphate. tRNA 3'-terminal CCA addition is required both for tRNA processing and repair. Also involved in tRNA surveillance by mediating tandem CCA addition to generate a CCACCA at the 3' terminus of unstable tRNAs. While stable tRNAs receive only 3'-terminal CCA, unstable tRNAs are marked with CCACCA and rapidly degraded. This chain is CCA-adding enzyme, found in Staphylococcus aureus (strain MSSA476).